A 910-amino-acid chain; its full sequence is NADH-quinone oxidoreductase subunit G (910 aa).

A 2Fe-2S ferredoxin-type domain is found at 1-83; it reads MAKIYVDGKA…GTIISINDDT (83 aa). Positions 34, 45, 48, and 67 each coordinate [2Fe-2S] cluster. Positions 83 to 122 constitute a 4Fe-4S His(Cys)3-ligated-type domain; the sequence is TSKKFRSNIVELLLTNHPHDCPVCEEGGNCHLQDMTVMTT. Positions 99, 103, 106, 112, 151, 154, 157, 201, 228, 231, 235, and 263 each coordinate [4Fe-4S] cluster. The 4Fe-4S Mo/W bis-MGD-type domain maps to 221 to 277; the sequence is MQYAPGICQNCSIGCNISIGERYGEIRRIENRYHESINHYLICDLGRFGYSHTNLKN.

Belongs to the complex I 75 kDa subunit family. As to quaternary structure, composed of 13 different subunits. Subunits NuoCD, E, F, and G constitute the peripheral sector of the complex. It depends on [2Fe-2S] cluster as a cofactor. [4Fe-4S] cluster is required as a cofactor.

It carries out the reaction a quinone + NADH + 5 H(+)(in) = a quinol + NAD(+) + 4 H(+)(out). Functionally, NDH-1 shuttles electrons from NADH, via FMN and iron-sulfur (Fe-S) centers, to quinones in the respiratory chain. Couples the redox reaction to proton translocation (for every two electrons transferred, four hydrogen ions are translocated across the cytoplasmic membrane), and thus conserves the redox energy in a proton gradient. The polypeptide is NADH-quinone oxidoreductase subunit G (nuoG) (Buchnera aphidicola subsp. Schizaphis graminum (strain Sg)).